Reading from the N-terminus, the 191-residue chain is Thymidylate kinase (191 aa).

Residue 7 to 14 (GVDGAGKS) coordinates ATP.

The protein belongs to the thymidylate kinase family.

The enzyme catalyses dTMP + ATP = dTDP + ADP. Phosphorylation of dTMP to form dTDP in both de novo and salvage pathways of dTTP synthesis. The polypeptide is Thymidylate kinase (tmk) (Helicobacter pylori (strain ATCC 700392 / 26695) (Campylobacter pylori)).